Reading from the N-terminus, the 514-residue chain is MKEYQIHLELDRSQQHNFLYPLLFREYIYALAHDHGLNRSTIPLENGGYDNKSSSLSVKRLISRTYQRIHLSIYAKDSNPNHFIGHNNKFYSQMISEGFSVIVEIPFSLRLVAFLEGKEKEMAKSHNFQSIHSIFPFFENNFSHLHYVLDVLIPYPIRPEILVRTFRYWVKDASSFHLLRFFLHEYFNLNSLITPKKSNSIFSTSNPRFFLFLYNSHVYEYESIFFFLRNQSSHLRSTSSGPLFERISFYGKVEDLVQVFVNDFQDYLWLFKHPIMHYVRYQGKSVLASKDMPLLMNKWKYYLVNLWQWHFHVWSQPGRIHINHLYKDYIDFLGYLSRGRLNTLVVRSQMLENAFLIDNAMKQFETTVPIIPLIGSLTTARFCNSLGHPISKPTWADSSDSYIIDRFMRICRNLSHYHSGSSKKKSLYRIKYILRVSCVKSLVRKHKSTVRVFLKRLGSEFLEEFFTEEEHVLSLIFPRALFTSRRLYRGRVWYFDIICINDLVNHDKLEIVPN.

It belongs to the intron maturase 2 family. MatK subfamily.

Its subcellular location is the plastid. The protein localises to the chloroplast. Usually encoded in the trnK tRNA gene intron. Probably assists in splicing its own and other chloroplast group II introns. This Acer monspessulanum (Montpellier maple) protein is Maturase K.